Reading from the N-terminus, the 297-residue chain is MRAINKFLITVCIALLASVAVALGDGEETGEAEEFKVIDHSKVWEEKGITKYEGSKTCIQCHEDKVRQFFHSYHYQLFSENEGINGKTMIFGGKMAFNDYCMAMFVNNGTKVVNWIGYITLKKAPEGYEDLVGSFTGLTGCSMCHGVGMGLPPSPQESEEQLGNIDCLACHAKPDVYVSGVLGIKLGLKNVTKDDQGRWRYVINVPTEELAKSIINRPQSKNCLACHAFSGGGPHLKRPNIAPDLLNPELAAEFDVHFKAGLGCTDCHSGENHEFGTNSVDTWSREGEGAEVQQLPH.

The first 24 residues, 1-24 (MRAINKFLITVCIALLASVAVALG), serve as a signal peptide directing secretion. 15 residues coordinate heme: C58, C61, H62, C141, C144, H145, C167, C170, H171, C223, C226, H227, C264, C267, and H268. The interval 277–297 (TNSVDTWSREGEGAEVQQLPH) is disordered.

Post-translationally, binds 5 heme groups per subunit.

This is an uncharacterized protein from Archaeoglobus fulgidus (strain ATCC 49558 / DSM 4304 / JCM 9628 / NBRC 100126 / VC-16).